A 515-amino-acid polypeptide reads, in one-letter code: Galactose/methyl galactoside import ATP-binding protein MglA (515 aa).

ABC transporter domains are found at residues 8–243 and 254–499; these read LEMR…VGRE and IPKE…AKYL. ATP is bound at residue 40–47; that stretch reads GENGAGKS.

Belongs to the ABC transporter superfamily. Galactose/methyl galactoside importer (TC 3.A.1.2.3) family. The complex is composed of one ATP-binding protein (MglA), two transmembrane proteins (MglC) and a solute-binding protein (MglB).

It localises to the cell membrane. It catalyses the reaction D-galactose(out) + ATP + H2O = D-galactose(in) + ADP + phosphate + H(+). The enzyme catalyses methyl beta-D-galactoside(out) + ATP + H2O = methyl beta-D-galactoside(in) + ADP + phosphate + H(+). Its function is as follows. Part of the ABC transporter complex MglABC involved in galactose/methyl galactoside import. Responsible for energy coupling to the transport system. In Clostridium perfringens (strain 13 / Type A), this protein is Galactose/methyl galactoside import ATP-binding protein MglA.